We begin with the raw amino-acid sequence, 555 residues long: Urocanate hydratase (555 aa).

NAD(+) is bound by residues 52 to 53 (GG), Gln-130, 176 to 178 (GMG), Glu-196, Arg-201, 242 to 243 (NA), 263 to 267 (QTSAH), 273 to 274 (YL), and Tyr-322. Cys-410 is a catalytic residue. Gly-492 is an NAD(+) binding site.

This sequence belongs to the urocanase family. NAD(+) is required as a cofactor.

The protein localises to the cytoplasm. The enzyme catalyses 4-imidazolone-5-propanoate = trans-urocanate + H2O. Its pathway is amino-acid degradation; L-histidine degradation into L-glutamate; N-formimidoyl-L-glutamate from L-histidine: step 2/3. Its function is as follows. Catalyzes the conversion of urocanate to 4-imidazolone-5-propionate. The chain is Urocanate hydratase from Shewanella putrefaciens (strain CN-32 / ATCC BAA-453).